We begin with the raw amino-acid sequence, 616 residues long: Chaperone protein HscA homolog (616 aa).

This sequence belongs to the heat shock protein 70 family.

Probable chaperone. Has a low intrinsic ATPase activity which is markedly stimulated by HscB. This Vibrio cholerae serotype O1 (strain ATCC 39315 / El Tor Inaba N16961) protein is Chaperone protein HscA homolog.